A 371-amino-acid polypeptide reads, in one-letter code: 4-hydroxy-3-methylbut-2-en-1-yl diphosphate synthase (flavodoxin) (371 aa).

4 residues coordinate [4Fe-4S] cluster: Cys-271, Cys-274, Cys-306, and Glu-313.

It belongs to the IspG family. [4Fe-4S] cluster is required as a cofactor.

It carries out the reaction (2E)-4-hydroxy-3-methylbut-2-enyl diphosphate + oxidized [flavodoxin] + H2O + 2 H(+) = 2-C-methyl-D-erythritol 2,4-cyclic diphosphate + reduced [flavodoxin]. It participates in isoprenoid biosynthesis; isopentenyl diphosphate biosynthesis via DXP pathway; isopentenyl diphosphate from 1-deoxy-D-xylulose 5-phosphate: step 5/6. Converts 2C-methyl-D-erythritol 2,4-cyclodiphosphate (ME-2,4cPP) into 1-hydroxy-2-methyl-2-(E)-butenyl 4-diphosphate. This chain is 4-hydroxy-3-methylbut-2-en-1-yl diphosphate synthase (flavodoxin), found in Actinobacillus succinogenes (strain ATCC 55618 / DSM 22257 / CCUG 43843 / 130Z).